Consider the following 101-residue polypeptide: Small ribosomal subunit protein uS14 (101 aa).

Belongs to the universal ribosomal protein uS14 family. Part of the 30S ribosomal subunit. Contacts proteins S3 and S10.

In terms of biological role, binds 16S rRNA, required for the assembly of 30S particles and may also be responsible for determining the conformation of the 16S rRNA at the A site. The protein is Small ribosomal subunit protein uS14 of Shewanella woodyi (strain ATCC 51908 / MS32).